A 57-amino-acid polypeptide reads, in one-letter code: Large ribosomal subunit protein bL32 (57 aa).

It belongs to the bacterial ribosomal protein bL32 family.

This is Large ribosomal subunit protein bL32 from Streptomyces avermitilis (strain ATCC 31267 / DSM 46492 / JCM 5070 / NBRC 14893 / NCIMB 12804 / NRRL 8165 / MA-4680).